The following is a 61-amino-acid chain: Small ribosomal subunit protein uS14 (61 aa).

The segment covering 1–12 has biased composition (acidic residues); that stretch reads MSESETTDEPDS. The interval 1-25 is disordered; that stretch reads MSESETTDEPDSETASSERTGQLES. Positions 26, 29, 44, and 47 each coordinate Zn(2+).

This sequence belongs to the universal ribosomal protein uS14 family. Zinc-binding uS14 subfamily. In terms of assembly, part of the 30S ribosomal subunit. It depends on Zn(2+) as a cofactor.

In terms of biological role, binds 16S rRNA, required for the assembly of 30S particles. This Haloarcula marismortui (strain ATCC 43049 / DSM 3752 / JCM 8966 / VKM B-1809) (Halobacterium marismortui) protein is Small ribosomal subunit protein uS14.